The chain runs to 221 residues: Bcl-2-related ovarian killer protein homolog A (221 aa).

A BH4 motif is present at residues 32-44 (KVLCRDYIHSRLH). The BH3 motif lies at 64–80 (VSSVLLWLGDELEYLRP). The BH1 motif lies at 110–140 (EIFSTEYSRKGLEKHKGVTWGKIVSLYAVAG). The BH2 motif lies at 173–187 (WLKKRGGWADITKCV). Residues 198-218 (WLVTAACACGHYLKAVVFYLL) form a helical membrane-spanning segment.

It belongs to the Bcl-2 family. In terms of tissue distribution, strongest expression in ovary and eye, weaker expression in gut, kidney and brain. Little expression in liver or heart.

The protein localises to the membrane. Functionally, may play a role in apoptosis. Does not appear to show pro-apoptotic activity when expressed ectopically in early embryos. The protein is Bcl-2-related ovarian killer protein homolog A of Danio rerio (Zebrafish).